A 570-amino-acid polypeptide reads, in one-letter code: Proline--tRNA ligase (570 aa).

Belongs to the class-II aminoacyl-tRNA synthetase family. ProS type 1 subfamily. As to quaternary structure, homodimer.

The protein resides in the cytoplasm. It catalyses the reaction tRNA(Pro) + L-proline + ATP = L-prolyl-tRNA(Pro) + AMP + diphosphate. Catalyzes the attachment of proline to tRNA(Pro) in a two-step reaction: proline is first activated by ATP to form Pro-AMP and then transferred to the acceptor end of tRNA(Pro). As ProRS can inadvertently accommodate and process non-cognate amino acids such as alanine and cysteine, to avoid such errors it has two additional distinct editing activities against alanine. One activity is designated as 'pretransfer' editing and involves the tRNA(Pro)-independent hydrolysis of activated Ala-AMP. The other activity is designated 'posttransfer' editing and involves deacylation of mischarged Ala-tRNA(Pro). The misacylated Cys-tRNA(Pro) is not edited by ProRS. The polypeptide is Proline--tRNA ligase (Clostridium perfringens (strain SM101 / Type A)).